Reading from the N-terminus, the 271-residue chain is Phosphonates import ATP-binding protein PhnC 2 (271 aa).

The ABC transporter domain maps to 2–245 (LTIDKLTKRF…VARDIYGAGA (244 aa)). 34–41 (GRSGAGKS) serves as a coordination point for ATP.

It belongs to the ABC transporter superfamily. Phosphonates importer (TC 3.A.1.9.1) family. The complex is composed of two ATP-binding proteins (PhnC), two transmembrane proteins (PhnE) and a solute-binding protein (PhnD).

The protein localises to the cell inner membrane. The enzyme catalyses phosphonate(out) + ATP + H2O = phosphonate(in) + ADP + phosphate + H(+). In terms of biological role, part of the ABC transporter complex PhnCDE involved in phosphonates import. Responsible for energy coupling to the transport system. This is Phosphonates import ATP-binding protein PhnC 2 from Roseobacter denitrificans (strain ATCC 33942 / OCh 114) (Erythrobacter sp. (strain OCh 114)).